Consider the following 340-residue polypeptide: Melanin-concentrating hormone receptor 2 (340 aa).

Residues 1 to 39 (MNPFHASCWNTSAELLNKSWNKEFAYQTASVVDTVILPS) are Extracellular-facing. N-linked (GlcNAc...) asparagine glycosylation is found at Asn10 and Asn17. A helical membrane pass occupies residues 40-60 (MIGIICSTGLVGNILIVFTII). Residues 61 to 69 (RSRKKTVPD) are Cytoplasmic-facing. A helical membrane pass occupies residues 70-90 (IYICNLAVADLVHIVGMPFLI). The Extracellular portion of the chain corresponds to 91-104 (HQWARGGEWVFGGP). The chain crosses the membrane as a helical span at residues 105 to 129 (LCTIITSLDTCNQFACSAIMTVMSV). Residues 130–154 (DRYFALVQPFRLTRWRTRYKTIRIN) are Cytoplasmic-facing. Residues 155–175 (LGLWAASFILALPVWVYSKVI) form a helical membrane-spanning segment. The Extracellular segment spans residues 176-200 (KFKDGVESCAFDLTSPDDVLWYTLY). The chain crosses the membrane as a helical span at residues 201 to 221 (LTITTFFFPLPLILVCYILIL). Residues 222–252 (CYTWEMYQQNKDARCCNPSVPKQRVMKLTKM) lie on the Cytoplasmic side of the membrane. The helical transmembrane segment at 253–273 (VLVLVVVFILSAAPYHVIQLV) threads the bilayer. At 274–288 (NLQMEQPTLAFYVGY) the chain is on the extracellular side. Residues 289 to 309 (YLSICLSYASSSINPFLYILL) traverse the membrane as a helical segment. Residues 310–340 (SGNFQKRLPQIQRRATEKEINNMGNTLKSHF) are Cytoplasmic-facing.

Belongs to the G-protein coupled receptor 1 family. Specifically expressed in the brain, with highest levels in cerebral cortex, hippocampus and amygdala. No expression detected in the cerebellum, thalamus or hypothalamus.

Its subcellular location is the cell membrane. Receptor for melanin-concentrating hormone, coupled to G proteins that activate phosphoinositide hydrolysis. In Homo sapiens (Human), this protein is Melanin-concentrating hormone receptor 2 (MCHR2).